Reading from the N-terminus, the 244-residue chain is Ras-related protein Rab-12 (244 aa).

N-acetylmethionine is present on Met-1. The span at 1–10 (MDPGAALQRR) shows a compositional bias: low complexity. The disordered stretch occupies residues 1–37 (MDPGAALQRRAGGGGGLGAGSPALSGGQGRRRKQPPR). Residues Ser-21 and Ser-25 each carry the phosphoserine modification. Residue Gly-52 coordinates GDP. The GTP site is built by Gly-52, Val-53, Gly-54, Lys-55, and Thr-56. GDP-binding residues include Gly-54, Lys-55, Thr-56, and Ser-57. Thr-56 contacts Mg(2+). Short sequence motifs (switch) lie at residues 65–79 (DTFC…GVDF) and 97–114 (DTAG…YYRS). GTP is bound by residues Ser-73 and Thr-74. Mg(2+) is bound by residues Thr-74 and Asp-97. Gly-100 is a binding site for GTP. Phosphoserine; by LRRK2 is present on Ser-106. Residues Asn-155, Lys-156, Asp-158, and Cys-159 each coordinate GDP. Residues Asn-155, Lys-156, and Asp-158 each coordinate GTP. Residues Ser-186, Ala-187, and Lys-188 each contribute to the GTP site. The GDP site is built by Ala-187 and Lys-188. Residues 225-244 (QPEPEIPPELPPPRPHVRCC) form a disordered region. Over residues 228 to 238 (PEIPPELPPPR) the composition is skewed to pro residues. Residues Cys-243 and Cys-244 are each lipidated (S-geranylgeranyl cysteine).

This sequence belongs to the small GTPase superfamily. Rab family. As to quaternary structure, interacts with RABIF. Interacts with OPTN. Interacts with LRRK2; interaction facilitates phosphorylation of Ser-106. Interacts with GDI1, GDI2, CHM and CHML; these interactions are disrupted by phosphorylation on Ser-106. Interacts with RILPL1 and RILPL2; these interactions are dependent on phosphorylation of Ser-106. It depends on Mg(2+) as a cofactor. In terms of processing, phosphorylation of Ser-106 in the switch II region by LRRK2 prevents the association of RAB regulatory proteins, including CHM, CHML and RAB GDP dissociation inhibitors GDI1 and GDI2.

It is found in the recycling endosome membrane. Its subcellular location is the lysosome membrane. The protein resides in the golgi apparatus membrane. It localises to the cytoplasmic vesicle. The protein localises to the autophagosome. It catalyses the reaction GTP + H2O = GDP + phosphate + H(+). Its activity is regulated as follows. Regulated by guanine nucleotide exchange factors (GEFs) including DENND3 which promote the exchange of bound GDP for free GTP. Regulated by GTPase activating proteins (GAPs) which increase the GTP hydrolysis activity. Inhibited by GDP dissociation inhibitors (GDIs). Its function is as follows. The small GTPases Rab are key regulators of intracellular membrane trafficking, from the formation of transport vesicles to their fusion with membranes. Rabs cycle between an inactive GDP-bound form and an active GTP-bound form that is able to recruit to membranes different sets of downstream effectors directly responsible for vesicle formation, movement, tethering and fusion. RAB12 may play a role in protein transport from recycling endosomes to lysosomes regulating, for instance, the degradation of the transferrin receptor. Involved in autophagy. The chain is Ras-related protein Rab-12 from Homo sapiens (Human).